Reading from the N-terminus, the 33-residue chain is Ferredoxin (33 aa).

Positions 3 to 33 (KYKVRLLSEAEGIDVTIDSADDVYILDAAEE) constitute a 2Fe-2S ferredoxin-type domain.

It belongs to the 2Fe2S plant-type ferredoxin family. Requires [2Fe-2S] cluster as cofactor.

It is found in the plastid. The protein resides in the chloroplast. Its function is as follows. Ferredoxins are iron-sulfur proteins that transfer electrons in a wide variety of metabolic reactions. This is Ferredoxin from Porphyridium aerugineum (Red microalga).